Reading from the N-terminus, the 387-residue chain is Aminodeoxyfutalosine deaminase (387 aa).

The segment covering 1-10 has biased composition (basic and acidic residues); that stretch reads MRPAYDDPRT. The segment at 1–37 is disordered; the sequence is MRPAYDDPRTTDQPITRARPPPRAARGRRLGEEPLTE. The Zn(2+) site is built by H61 and H63. Residues R116, D183, and G217 each coordinate substrate. H244 provides a ligand contact to Zn(2+). E247 functions as the Proton donor in the catalytic mechanism. D325 is a binding site for Zn(2+).

Belongs to the metallo-dependent hydrolases superfamily. Adenosine and AMP deaminases family. Requires Zn(2+) as cofactor.

The enzyme catalyses 6-amino-6-deoxyfutalosine + H2O + H(+) = futalosine + NH4(+). It functions in the pathway quinol/quinone metabolism; menaquinone biosynthesis. Its function is as follows. Catalyzes the deamination of aminodeoxyfutalosine (AFL) into futalosine (FL), a step in the biosynthesis of menaquinone (MK, vitamin K2). The sequence is that of Aminodeoxyfutalosine deaminase from Streptomyces coelicolor (strain ATCC BAA-471 / A3(2) / M145).